A 1009-amino-acid polypeptide reads, in one-letter code: Regulator of telomere elongation helicase 1 homolog (1009 aa).

Residues 7–322 (AGIPVHFPFE…KEMLLELEKA (316 aa)) form the Helicase ATP-binding domain. Position 42–49 (42–49 (SPTGTGKT)) interacts with ATP. Residues Cys146, Cys164, Cys173, and Cys209 each contribute to the [4Fe-4S] cluster site. The DEAH box motif lies at 252–255 (DEAH).

It belongs to the helicase family. RAD3/XPD subfamily.

Its subcellular location is the nucleus. The catalysed reaction is ATP + H2O = ADP + phosphate + H(+). In terms of biological role, a probable ATP-dependent DNA helicase implicated in DNA repair and the maintenance of genomic stability. Acts as an anti-recombinase to counteract toxic recombination and limit crossover during meiosis. Regulates meiotic recombination and crossover homeostasis by physically dissociating strand invasion events and thereby promotes noncrossover repair by meiotic synthesis dependent strand annealing (SDSA) as well as disassembly of D loop recombination intermediates. This is Regulator of telomere elongation helicase 1 homolog from Drosophila persimilis (Fruit fly).